The following is a 294-amino-acid chain: 4-hydroxy-tetrahydrodipicolinate synthase (294 aa).

A pyruvate-binding site is contributed by threonine 47. The Proton donor/acceptor role is filled by tyrosine 135. The active-site Schiff-base intermediate with substrate is the lysine 163. Pyruvate is bound at residue threonine 205.

This sequence belongs to the DapA family. As to quaternary structure, homotetramer; dimer of dimers.

It localises to the cytoplasm. It catalyses the reaction L-aspartate 4-semialdehyde + pyruvate = (2S,4S)-4-hydroxy-2,3,4,5-tetrahydrodipicolinate + H2O + H(+). Its pathway is amino-acid biosynthesis; L-lysine biosynthesis via DAP pathway; (S)-tetrahydrodipicolinate from L-aspartate: step 3/4. Catalyzes the condensation of (S)-aspartate-beta-semialdehyde [(S)-ASA] and pyruvate to 4-hydroxy-tetrahydrodipicolinate (HTPA). This chain is 4-hydroxy-tetrahydrodipicolinate synthase, found in Rickettsia felis (strain ATCC VR-1525 / URRWXCal2) (Rickettsia azadi).